A 279-amino-acid polypeptide reads, in one-letter code: Secreted RxLR effector protein 152 (279 aa).

A signal peptide spans 1–22; sequence MRNGSVLFGLFFIGHSCSVLLA. The RxLR-dEER motif lies at 47-62; the sequence is RTLQADDSERTLAEER.

It belongs to the RxLR effector family.

The protein localises to the secreted. It is found in the host nucleus. Its function is as follows. Secreted effector that completely suppresses the host cell death induced by cell death-inducing proteins. The sequence is that of Secreted RxLR effector protein 152 from Plasmopara viticola (Downy mildew of grapevine).